The chain runs to 430 residues: Histidinol dehydrogenase (430 aa).

Positions 237, 259, and 262 each coordinate substrate. Zn(2+) contacts are provided by Q259 and H262. Residues E327 and H328 each act as proton acceptor in the active site. Substrate is bound by residues H328, D361, E415, and H420. D361 contributes to the Zn(2+) binding site. H420 serves as a coordination point for Zn(2+).

This sequence belongs to the histidinol dehydrogenase family. The cofactor is Zn(2+).

The catalysed reaction is L-histidinol + 2 NAD(+) + H2O = L-histidine + 2 NADH + 3 H(+). Its pathway is amino-acid biosynthesis; L-histidine biosynthesis; L-histidine from 5-phospho-alpha-D-ribose 1-diphosphate: step 9/9. In terms of biological role, catalyzes the sequential NAD-dependent oxidations of L-histidinol to L-histidinaldehyde and then to L-histidine. The polypeptide is Histidinol dehydrogenase (Mesorhizobium japonicum (strain LMG 29417 / CECT 9101 / MAFF 303099) (Mesorhizobium loti (strain MAFF 303099))).